Here is a 760-residue protein sequence, read N- to C-terminus: General transcription and DNA repair factor IIH helicase subunit XPD (760 aa).

In terms of domain architecture, Helicase ATP-binding spans 7–283 (GLLVYFPYDY…KETDEQRLRD (277 aa)). Residue 42–49 (MPSGTGKT) participates in ATP binding. Cys116, Cys134, Cys155, and Cys190 together coordinate [4Fe-4S] cluster. Positions 234-237 (DEAH) match the DEAH box motif. Positions 438 to 637 (MDASLAIKPV…TQSRILKARL (200 aa)) are mediates interaction with MMS19. A Nuclear localization signal motif is present at residues 682–695 (KRFARADKRGKLPR).

Belongs to the helicase family. RAD3/XPD subfamily. Component of the 7-subunit TFIIH core complex composed of XPB/ERCC3, XPD/ERCC2, GTF2H1, GTF2H2, GTF2H3, GTF2H4 and GTF2H5, which is active in NER. The core complex associates with the 3-subunit CDK-activating kinase (CAK) module composed of CCNH/cyclin H, CDK7 and MNAT1 to form the 10-subunit holoenzyme (holo-TFIIH) active in transcription. The interaction with GTF2H2 results in the stimulation of the 5'--&gt;3' helicase activity. Component of the MMXD complex, which includes CIAO1, ERCC2, CIAO2B, MMS19 and SLC25A5. Interacts with CIAO1 and CIAO2B; the interaction WITH CIAO2B is direct. Interacts with ATF7IP. Interacts directly with MMS19. Part of TBP-based Pol II pre-initiation complex (PIC), in which Pol II core assembles with general transcription factors and other specific initiation factors including GTF2E1, GTF2E2, GTF2F1, GTF2F2, TCEA1, ERCC2, ERCC3, GTF2H2, GTF2H3, GTF2H4, GTF2H5, GTF2A1, GTF2A2, GTF2B and TBP; this large multi-subunit PIC complex mediates DNA unwinding and targets Pol II core to the transcription start site where the first phosphodiester bond forms. Mg(2+) serves as cofactor. [4Fe-4S] cluster is required as a cofactor. In terms of processing, ISGylated.

The protein localises to the nucleus. It localises to the cytoplasm. It is found in the cytoskeleton. Its subcellular location is the spindle. The enzyme catalyses Couples ATP hydrolysis with the unwinding of duplex DNA at the replication fork by translocating in the 5'-3' direction. This creates two antiparallel DNA single strands (ssDNA). The leading ssDNA polymer is the template for DNA polymerase III holoenzyme which synthesizes a continuous strand.. It catalyses the reaction ATP + H2O = ADP + phosphate + H(+). In terms of biological role, ATP-dependent 5'-3' DNA helicase. Component of the general transcription and DNA repair factor IIH (TFIIH) core complex which is involved in general and transcription-coupled nucleotide excision repair (NER) of damaged DNA. When complexed to CDK-activating kinase (CAK), involved in transcription by RNA polymerase II. In NER, TFIIH acts by opening DNA around the lesion to allow the excision of the damaged oligonucleotide and its replacement by a new DNA fragment. The ATP-dependent helicase activity of XPD/ERCC2 is required for DNA opening. In transcription, TFIIH has an essential role in transcription initiation. When the pre-initiation complex (PIC) has been established, TFIIH is required for promoter opening and promoter escape. Phosphorylation of the C-terminal tail (CTD) of the largest subunit of RNA polymerase II by the kinase module CAK controls the initiation of transcription. XPD/ERCC2 acts by forming a bridge between CAK and the core-TFIIH complex. Involved in the regulation of vitamin-D receptor activity. As part of the mitotic spindle-associated MMXD complex it plays a role in chromosome segregation. Might have a role in aging process and could play a causative role in the generation of skin cancers. This chain is General transcription and DNA repair factor IIH helicase subunit XPD, found in Cricetulus griseus (Chinese hamster).